Consider the following 123-residue polypeptide: Large ribosomal subunit protein bL17 (123 aa).

The protein belongs to the bacterial ribosomal protein bL17 family. Part of the 50S ribosomal subunit. Contacts protein L32.

The polypeptide is Large ribosomal subunit protein bL17 (Borreliella afzelii (strain PKo) (Borrelia afzelii)).